A 510-amino-acid chain; its full sequence is Archaeosine synthase subunit alpha (510 aa).

Positions 427–510 constitute a PUA domain; the sequence is LGKFTINKAS…LKKGIAVKVR (84 aa).

It belongs to the archaeosine synthase type 1 family. As to quaternary structure, forms a robust complex with the archaeosine synthase beta subunit RaSEA, likely an alpha(2)beta(2) heterotetrameric structure. Formation of this complex highly increases lysine transfer activity.

It carries out the reaction 7-cyano-7-carbaguanosine(15) in tRNA + L-lysine = 7-N-[(5S)-5-amino-5-carboxypentyl]formamidino-7-deazaguanosine(15) in tRNA. It participates in tRNA modification; archaeosine-tRNA biosynthesis. In terms of biological role, functions in the biosynthesis of archaeosine, a modified nucleoside present in the dihydrouridine loop (D-loop) of archaeal tRNAs. Catalyzes the addition of L-lysine to the cyano group of 7-cyano-7-deazaguanine (preQ0)-modified tRNAs at position 15, to generate q0kN15-tRNA, a q0N lysine adduct identified as 7-N-[(5S)-5-amino-5-carboxypentyl]formamidino-7-deazaguanosine. The sequence is that of Archaeosine synthase subunit alpha from Thermoplasma acidophilum (strain ATCC 25905 / DSM 1728 / JCM 9062 / NBRC 15155 / AMRC-C165).